The chain runs to 370 residues: Anhydro-N-acetylmuramic acid kinase (370 aa).

Position 13–20 (13–20 (GTSMDGVD)) interacts with ATP.

This sequence belongs to the anhydro-N-acetylmuramic acid kinase family.

The catalysed reaction is 1,6-anhydro-N-acetyl-beta-muramate + ATP + H2O = N-acetyl-D-muramate 6-phosphate + ADP + H(+). Its pathway is amino-sugar metabolism; 1,6-anhydro-N-acetylmuramate degradation. The protein operates within cell wall biogenesis; peptidoglycan recycling. In terms of biological role, catalyzes the specific phosphorylation of 1,6-anhydro-N-acetylmuramic acid (anhMurNAc) with the simultaneous cleavage of the 1,6-anhydro ring, generating MurNAc-6-P. Is required for the utilization of anhMurNAc either imported from the medium or derived from its own cell wall murein, and thus plays a role in cell wall recycling. This is Anhydro-N-acetylmuramic acid kinase from Vibrio vulnificus (strain YJ016).